We begin with the raw amino-acid sequence, 126 residues long: uncharacterized protein (126 aa).

2 stretches are compositionally biased toward basic residues: residues 21–31 (RKKRKKRKKRR) and 41–83 (RILK…RKRR). The disordered stretch occupies residues 21 to 83 (RKKRKKRKKR…RSPRKRRKRR (63 aa)).

This is an uncharacterized protein from Saccharomyces cerevisiae (strain ATCC 204508 / S288c) (Baker's yeast).